The primary structure comprises 155 residues: Endoribonuclease YbeY (155 aa).

3 residues coordinate Zn(2+): His114, His118, and His124.

The protein belongs to the endoribonuclease YbeY family. Requires Zn(2+) as cofactor.

Its subcellular location is the cytoplasm. Functionally, single strand-specific metallo-endoribonuclease involved in late-stage 70S ribosome quality control and in maturation of the 3' terminus of the 16S rRNA. This chain is Endoribonuclease YbeY, found in Escherichia coli O81 (strain ED1a).